We begin with the raw amino-acid sequence, 306 residues long: tRNA-cytidine(32) 2-sulfurtransferase (306 aa).

A disordered region spans residues 1–25 (MSAVISLPDPQPRAARDPRVAEREQ). Residues 14-25 (AARDPRVAEREQ) show a composition bias toward basic and acidic residues. The PP-loop motif signature appears at 57 to 62 (SGGKDS). [4Fe-4S] cluster is bound by residues cysteine 132, cysteine 135, and cysteine 223. The segment at 286–306 (AHAWLAGSPADADADPETPTV) is disordered. Acidic residues predominate over residues 297-306 (ADADPETPTV).

The protein belongs to the TtcA family. In terms of assembly, homodimer. Mg(2+) serves as cofactor. It depends on [4Fe-4S] cluster as a cofactor.

It localises to the cytoplasm. It catalyses the reaction cytidine(32) in tRNA + S-sulfanyl-L-cysteinyl-[cysteine desulfurase] + AH2 + ATP = 2-thiocytidine(32) in tRNA + L-cysteinyl-[cysteine desulfurase] + A + AMP + diphosphate + H(+). It functions in the pathway tRNA modification. In terms of biological role, catalyzes the ATP-dependent 2-thiolation of cytidine in position 32 of tRNA, to form 2-thiocytidine (s(2)C32). The sulfur atoms are provided by the cysteine/cysteine desulfurase (IscS) system. The polypeptide is tRNA-cytidine(32) 2-sulfurtransferase (Stenotrophomonas maltophilia (strain K279a)).